A 275-amino-acid chain; its full sequence is Phosphonoacetaldehyde hydrolase (275 aa).

Asp-15 functions as the Nucleophile in the catalytic mechanism. Mg(2+)-binding residues include Asp-15 and Ala-17. Lys-56 functions as the Schiff-base intermediate with substrate in the catalytic mechanism. Asp-189 contacts Mg(2+).

The protein belongs to the HAD-like hydrolase superfamily. PhnX family. Homodimer. The cofactor is Mg(2+).

The catalysed reaction is phosphonoacetaldehyde + H2O = acetaldehyde + phosphate + H(+). Involved in phosphonate degradation. The sequence is that of Phosphonoacetaldehyde hydrolase from Pseudomonas entomophila (strain L48).